A 77-amino-acid chain; its full sequence is Apelin (77 aa).

A signal peptide spans 1–22 (MNLRRCVQALLLLWLCLSAVCG). Positions 23–41 (GPLLQTSDGKEMEEGTIRY) are excised as a propeptide. Positions 43 to 77 (VQPRGPRSGPGPWQGGRRKFRRQRPRLSHKGPMPF) are disordered. Positions 58–71 (GRRKFRRQRPRLSH) are enriched in basic residues. Gln65 is modified (pyrrolidone carboxylic acid).

This sequence belongs to the apelin family. At least 5 active peptides may be produced by proteolytic processing of the peptide precursor.

Its subcellular location is the secreted. The protein localises to the extracellular space. Functionally, peptide hormone that functions as endogenous ligand for the G-protein-coupled apelin receptor (APLNR/APJ), that plays a role in cadiovascular homeostasis. Functions as a balanced agonist activating both G(i) protein pathway and beta-arrestin pathway of APLNR. Downstream G proteins activation, apelin can inhibit cAMP production and activate key intracellular effectors such as ERKs. On the other hand, APLNR activation induces beta-arrestin recruitment to the membrane leading to desensitization and internalization of the receptor. Apelin blunts cardiac hypertrophic induction from APLNR on response to pathological stimuli, but also induces myocardial hypertrophy under normal conditions. Apelin-36 dissociates more hardly than (pyroglu)apelin-13 from APLNR. Involved in the regulation of cardiac precursor cell movements during gastrulation and heart morphogenesis. Has an inhibitory effect on cytokine production in response to T-cell receptor/CD3 cross-linking; the oral intake of apelin in the colostrum and the milk might therefore modulate immune responses in neonates. Plays a role in early coronary blood vessels formation. Mediates myocardial contractility in an ERK1/2-dependent manner. May also have a role in the central control of body fluid homeostasis by influencing vasopressin release and drinking behavior. In Bos taurus (Bovine), this protein is Apelin (APLN).